We begin with the raw amino-acid sequence, 213 residues long: Urease accessory protein UreE (213 aa).

Residues 170–213 (EHHGHSHSHSHSHSHDHDHDHDHDHDHDHQHGPSCSHGHHHGHR) are disordered. Over residues 182–200 (HSHDHDHDHDHDHDHDHQH) the composition is skewed to basic and acidic residues.

This sequence belongs to the UreE family.

Its subcellular location is the cytoplasm. Its function is as follows. Involved in urease metallocenter assembly. Binds nickel. Probably functions as a nickel donor during metallocenter assembly. This chain is Urease accessory protein UreE, found in Burkholderia mallei (strain NCTC 10229).